We begin with the raw amino-acid sequence, 501 residues long: Nuclear receptor-binding protein 2 (501 aa).

Residues 1 to 33 (MAAPEPAPRRAREREREREDESEDESDILEESP) are disordered. Positions 7 to 19 (APRRARERERERE) are enriched in basic and acidic residues. The segment covering 20 to 30 (DESEDESDILE) has biased composition (acidic residues). Positions 38–306 (QKRREQVNQG…AHSLLFHRVL (269 aa)) constitute a Protein kinase domain. 2 positions are modified to phosphothreonine: Thr-409 and Thr-411.

It belongs to the protein kinase superfamily. Ser/Thr protein kinase family.

Its subcellular location is the cytoplasm. Its function is as follows. May regulate apoptosis of neural progenitor cells during their differentiation. The sequence is that of Nuclear receptor-binding protein 2 from Homo sapiens (Human).